A 318-amino-acid chain; its full sequence is Protein phosphatase 1 regulatory subunit 3C (318 aa).

Positions 84 to 87 (RVVF) match the PP1-binding motif motif. The interaction with EPM2A stretch occupies residues 141–263 (PSADYLSFRN…YRIVHVQWKP (123 aa)). A CBM21 domain is found at 149 to 257 (RNHFQKNSVC…NNEGQNYRIV (109 aa)).

Interacts with PPP1CC catalytic subunit of PP1 and associates with glycogen. Forms complexes with glycogen phosphorylase, glycogen synthase and phosphorylase kinase which is necessary for its regulation of PP1 activity. Also interacts with EPM2A/laforin. Ubiquitinated by NHLRC1/malin in a EPM2A/laforin-dependent manner.

Functionally, acts as a glycogen-targeting subunit for PP1 and regulates its activity. Activates glycogen synthase, reduces glycogen phosphorylase activity and limits glycogen breakdown. Dramatically increases basal and insulin-stimulated glycogen synthesis upon overexpression in a variety of cell types. The sequence is that of Protein phosphatase 1 regulatory subunit 3C from Bos taurus (Bovine).